The following is a 177-amino-acid chain: MERGMESEAFYGLSARGWDGSEVSLGSFRGCVIMIANVASSCKFAESNYKSFAGLLDKFYRKGLRILLFPCNQYLGQESRPIEEIRGEVSKKYSDRFVVFDKVDVFGKGAHPVFRHLVNTKNGKGRLGNFIKWNFTKFLVDRKGCVVKRFGPSDIVKEDDENLLRSIEDGENGMQNS.

C42 is an active-site residue.

It belongs to the glutathione peroxidase family.

It is found in the cytoplasm. It carries out the reaction a hydroperoxy polyunsaturated fatty acid + 2 glutathione = a hydroxy polyunsaturated fatty acid + glutathione disulfide + H2O. Functionally, protects cells and enzymes from oxidative damage, by catalyzing the reduction of hydrogen peroxide, lipid peroxides and organic hydroperoxide, by glutathione. This Encephalitozoon cuniculi (strain GB-M1) (Microsporidian parasite) protein is Probable phospholipid hydroperoxide glutathione peroxidase.